A 254-amino-acid chain; its full sequence is Probable protein ABIL5 (254 aa).

A disordered region spans residues 1–26; the sequence is MEVAEAGVDGVAGRRQQEEASGAAPF.

It belongs to the ABI family. In terms of assembly, binds SCAR.

It localises to the cytoplasm. It is found in the cytoskeleton. Involved in regulation of actin and microtubule organization. Part of a WAVE complex that activates the Arp2/3 complex. This Oryza sativa subsp. japonica (Rice) protein is Probable protein ABIL5.